Consider the following 398-residue polypeptide: Acetate kinase (398 aa).

Asparagine 7 contacts Mg(2+). An ATP-binding site is contributed by lysine 14. Arginine 91 contacts substrate. The Proton donor/acceptor role is filled by aspartate 148. ATP-binding positions include 208-212 (HIGNG), 283-285 (DMR), and 331-335 (GVGEN). A Mg(2+)-binding site is contributed by glutamate 384.

Belongs to the acetokinase family. In terms of assembly, homodimer. Mg(2+) is required as a cofactor. Mn(2+) serves as cofactor.

Its subcellular location is the cytoplasm. The enzyme catalyses acetate + ATP = acetyl phosphate + ADP. It participates in metabolic intermediate biosynthesis; acetyl-CoA biosynthesis; acetyl-CoA from acetate: step 1/2. In terms of biological role, catalyzes the formation of acetyl phosphate from acetate and ATP. Can also catalyze the reverse reaction. This is Acetate kinase from Phocaeicola vulgatus (strain ATCC 8482 / DSM 1447 / JCM 5826 / CCUG 4940 / NBRC 14291 / NCTC 11154) (Bacteroides vulgatus).